The chain runs to 59 residues: MAKTIKITQTRSAIGRLPKHKATLLGLGLRRIGHTVEREDTPAVRGMVNAVSFMVKVEE.

This sequence belongs to the universal ribosomal protein uL30 family. As to quaternary structure, part of the 50S ribosomal subunit.

The polypeptide is Large ribosomal subunit protein uL30 (Citrobacter koseri (strain ATCC BAA-895 / CDC 4225-83 / SGSC4696)).